Reading from the N-terminus, the 903-residue chain is Alanine--tRNA ligase (903 aa).

Zn(2+) is bound by residues histidine 581, histidine 585, cysteine 693, and histidine 697.

This sequence belongs to the class-II aminoacyl-tRNA synthetase family. Requires Zn(2+) as cofactor.

The protein resides in the cytoplasm. It catalyses the reaction tRNA(Ala) + L-alanine + ATP = L-alanyl-tRNA(Ala) + AMP + diphosphate. Its function is as follows. Catalyzes the attachment of alanine to tRNA(Ala) in a two-step reaction: alanine is first activated by ATP to form Ala-AMP and then transferred to the acceptor end of tRNA(Ala). Also edits incorrectly charged Ser-tRNA(Ala) and Gly-tRNA(Ala) via its editing domain. In Psychrobacter sp. (strain PRwf-1), this protein is Alanine--tRNA ligase.